Here is a 106-residue protein sequence, read N- to C-terminus: Cell cycle protein GpsB (106 aa).

Residues 34-67 (LDVIIQDYDNFKQEIDRLKAENEKLKKSTPAVEQ) adopt a coiled-coil conformation. Residues 55–83 (NEKLKKSTPAVEQSRSRSQQPPTSQVNYD) form a disordered region. Residues 70–79 (SRSQQPPTSQ) show a composition bias toward low complexity.

The protein belongs to the GpsB family. Forms polymers through the coiled coil domains. Interacts with PBP1, MreC and EzrA.

The protein resides in the cytoplasm. Divisome component that associates with the complex late in its assembly, after the Z-ring is formed, and is dependent on DivIC and PBP2B for its recruitment to the divisome. Together with EzrA, is a key component of the system that regulates PBP1 localization during cell cycle progression. Its main role could be the removal of PBP1 from the cell pole after pole maturation is completed. Also contributes to the recruitment of PBP1 to the division complex. Not essential for septum formation. This chain is Cell cycle protein GpsB, found in Oceanobacillus iheyensis (strain DSM 14371 / CIP 107618 / JCM 11309 / KCTC 3954 / HTE831).